The following is a 1374-amino-acid chain: DNA-directed RNA polymerase subunit beta (1374 aa).

The protein belongs to the RNA polymerase beta chain family. The RNAP catalytic core consists of 2 alpha, 1 beta, 1 beta' and 1 omega subunit. When a sigma factor is associated with the core the holoenzyme is formed, which can initiate transcription.

It catalyses the reaction RNA(n) + a ribonucleoside 5'-triphosphate = RNA(n+1) + diphosphate. Its function is as follows. DNA-dependent RNA polymerase catalyzes the transcription of DNA into RNA using the four ribonucleoside triphosphates as substrates. The protein is DNA-directed RNA polymerase subunit beta of Acidovorax ebreus (strain TPSY) (Diaphorobacter sp. (strain TPSY)).